The primary structure comprises 300 residues: Cell surface glycoprotein CD200 receptor 1-A (300 aa).

Residues 1–24 (MEIAGKAVCVFLLLAIIKLRRSEG) form the signal peptide. The 100-residue stretch at 25 to 124 (INRVSANLGH…GNFHRLYHLT (100 aa)) folds into the Ig-like V-type domain. At 25–213 (INRVSANLGH…SINCSSSYRD (189 aa)) the chain is on the extracellular side. Intrachain disulfides connect cysteine 40–cysteine 108 and cysteine 143–cysteine 192. Residues asparagine 45, asparagine 76, asparagine 105, asparagine 171, asparagine 200, and asparagine 206 are each glycosylated (N-linked (GlcNAc...) asparagine). An Ig-like C2-type domain is found at 122 to 206 (HLTVIVAPRM…ATLNETKSIN (85 aa)). A helical membrane pass occupies residues 214–234 (LILCIAIILSFLIIITFMAVI). Topologically, residues 235–300 (YYLKLHGCRF…NLPQGQSPAT (66 aa)) are cytoplasmic.

It belongs to the CD200R family. Post-translationally, glycosylated. Phosphorylated. Highly expressed in macrophages, peripheral blood lymphocytes (PBL) and peripheral blood mononuclear cells (PBMC). Weakly expressed in bursa, thymus, spleen, liver and brain.

It localises to the membrane. The protein resides in the secreted. The polypeptide is Cell surface glycoprotein CD200 receptor 1-A (CD200R1A) (Gallus gallus (Chicken)).